The following is a 729-amino-acid chain: DNA topoisomerase 3 (729 aa).

Residues 3–136 enclose the Toprim domain; that stretch reads KKAVLAEKPS…VKRLWISSVT (134 aa). The Mg(2+) site is built by glutamate 9 and aspartate 105. The region spanning 153-590 is the Topo IA-type catalytic domain; that stretch reads YETLYAAAAA…EMKEYAKAVV (438 aa). The tract at residues 187-192 is interaction with DNA; that stretch reads SCGRVQ. The active-site O-(5'-phospho-DNA)-tyrosine intermediate is tyrosine 311. Residues 680–708 are disordered; that stretch reads FEQRRKQNKHKNVSKREVQSYMKKQNKQD.

This sequence belongs to the type IA topoisomerase family. Mg(2+) serves as cofactor.

It catalyses the reaction ATP-independent breakage of single-stranded DNA, followed by passage and rejoining.. In terms of biological role, releases the supercoiling and torsional tension of DNA, which is introduced during the DNA replication and transcription, by transiently cleaving and rejoining one strand of the DNA duplex. Introduces a single-strand break via transesterification at a target site in duplex DNA. The scissile phosphodiester is attacked by the catalytic tyrosine of the enzyme, resulting in the formation of a DNA-(5'-phosphotyrosyl)-enzyme intermediate and the expulsion of a 3'-OH DNA strand. The free DNA strand then undergoes passage around the unbroken strand, thus removing DNA supercoils. Finally, in the religation step, the DNA 3'-OH attacks the covalent intermediate to expel the active-site tyrosine and restore the DNA phosphodiester backbone. In Shouchella clausii (strain KSM-K16) (Alkalihalobacillus clausii), this protein is DNA topoisomerase 3.